Reading from the N-terminus, the 447-residue chain is Cysteine--tRNA ligase (447 aa).

Cys-28 serves as a coordination point for Zn(2+). A 'HIGH' region motif is present at residues 30-40 (PTVYNYIHIGN). Zn(2+) contacts are provided by Cys-211, His-236, and Glu-240. A 'KMSKS' region motif is present at residues 268–272 (KMSKS). An ATP-binding site is contributed by Lys-271.

Belongs to the class-I aminoacyl-tRNA synthetase family. As to quaternary structure, monomer. It depends on Zn(2+) as a cofactor.

It localises to the cytoplasm. It catalyses the reaction tRNA(Cys) + L-cysteine + ATP = L-cysteinyl-tRNA(Cys) + AMP + diphosphate. This Streptococcus pyogenes serotype M6 (strain ATCC BAA-946 / MGAS10394) protein is Cysteine--tRNA ligase.